A 690-amino-acid polypeptide reads, in one-letter code: Proprotein convertase subtilisin/kexin type 9 (690 aa).

The signal sequence occupies residues Met1–Ala28. Residues Gln29–Gln150 constitute a propeptide that is removed on maturation. Tyr36 carries the sulfotyrosine modification. At Ser45 the chain carries Phosphoserine. The Inhibitor I9 domain occupies Thr75–Val147. Residues Pro153 to Trp459 enclose the Peptidase S8 domain. Active-site charge relay system residues include Asp184 and His224. Intrachain disulfides connect Cys221–Cys253 and Cys321–Cys356. Ser384 (charge relay system) is an active-site residue. The tract at residues Gly448–Gln690 is C-terminal domain. Disulfide bonds link Cys455/Cys525, Cys475/Cys524, and Cys484/Cys507. The N-linked (GlcNAc...) asparagine glycan is linked to Asn531. Cystine bridges form between Cys532–Cys599, Cys550–Cys598, Cys560–Cys586, Cys606–Cys677, Cys624–Cys676, and Cys633–Cys652. Residue Ser686 is modified to Phosphoserine.

It belongs to the peptidase S8 family. As to quaternary structure, monomer. Can self-associate to form dimers and higher multimers which may have increased LDLR degrading activity. The precursor protein but not the mature protein may form multimers. Interacts with APOB, VLDLR, LRP8/APOER2 and BACE1. The full-length immature form (pro-PCSK9) interacts with SCNN1A, SCNN1B and SCNN1G. The pro-PCSK9 form (via C-terminal domain) interacts with LDLR. Interacts (via the C-terminal domain) with ANXA2 (via repeat Annexin 1); the interaction inhibits the degradation of LDLR. Requires Ca(2+) as cofactor. Cleavage by furin and PCSK5 generates a truncated inactive protein that is unable to induce LDLR degradation. Post-translationally, undergoes autocatalytic cleavage in the endoplasmic reticulum to release the propeptide from the N-terminus and the cleavage of the propeptide is strictly required for its maturation and activation. The cleaved propeptide however remains associated with the catalytic domain through non-covalent interactions, preventing potential substrates from accessing its active site. As a result, it is secreted from cells as a propeptide-containing, enzymatically inactive protein. In terms of processing, phosphorylation protects the propeptide against proteolysis.

The protein localises to the cytoplasm. It is found in the secreted. Its subcellular location is the endosome. It localises to the lysosome. The protein resides in the cell surface. The protein localises to the endoplasmic reticulum. It is found in the golgi apparatus. Its proteolytic activity is autoinhibited by the non-covalent binding of the propeptide to the catalytic domain. Inhibited by EGTA. Its function is as follows. Crucial player in the regulation of plasma cholesterol homeostasis. Binds to low-density lipid receptor family members: low density lipoprotein receptor (LDLR), very low density lipoprotein receptor (VLDLR), apolipoprotein E receptor (LRP1/APOER) and apolipoprotein receptor 2 (LRP8/APOER2), and promotes their degradation in intracellular acidic compartments. Acts via a non-proteolytic mechanism to enhance the degradation of the hepatic LDLR through a clathrin LDLRAP1/ARH-mediated pathway. May prevent the recycling of LDLR from endosomes to the cell surface or direct it to lysosomes for degradation. Can induce ubiquitination of LDLR leading to its subsequent degradation. Inhibits intracellular degradation of APOB via the autophagosome/lysosome pathway in a LDLR-independent manner. Involved in the disposal of non-acetylated intermediates of BACE1 in the early secretory pathway. Inhibits epithelial Na(+) channel (ENaC)-mediated Na(+) absorption by reducing ENaC surface expression primarily by increasing its proteasomal degradation. Regulates neuronal apoptosis via modulation of LRP8/APOER2 levels and related anti-apoptotic signaling pathways. The sequence is that of Proprotein convertase subtilisin/kexin type 9 (PCSK9) from Gorilla gorilla gorilla (Western lowland gorilla).